The sequence spans 334 residues: Phosphate acyltransferase (334 aa).

It belongs to the PlsX family. In terms of assembly, homodimer. Probably interacts with PlsY.

The protein resides in the cytoplasm. It carries out the reaction a fatty acyl-[ACP] + phosphate = an acyl phosphate + holo-[ACP]. The protein operates within lipid metabolism; phospholipid metabolism. Its function is as follows. Catalyzes the reversible formation of acyl-phosphate (acyl-PO(4)) from acyl-[acyl-carrier-protein] (acyl-ACP). This enzyme utilizes acyl-ACP as fatty acyl donor, but not acyl-CoA. This Fervidobacterium nodosum (strain ATCC 35602 / DSM 5306 / Rt17-B1) protein is Phosphate acyltransferase.